Reading from the N-terminus, the 1103-residue chain is Retinal guanylyl cyclase 2 (1103 aa).

The first 46 residues, 1–46, serve as a signal peptide directing secretion; that stretch reads MFLAPWPFSHLMLWFVTLGRQRGQHGLASFKLLWCLWLLVLMSLPL. Residues 47–465 are Extracellular-facing; that stretch reads QVWAPPYKIG…DGRICQGGIN (419 aa). A disulfide bond links C104 and C132. A helical transmembrane segment spans residues 466–490; it reads PTFALMVCLALLIALLSINGFAYFI. Over 491–1103 the chain is Cytoplasmic; that stretch reads RHRINKIQLI…FQRRKQKSSW (613 aa). Residues 532–812 form the Protein kinase domain; it reads FQITSEVQSG…DEIFNQFKTF (281 aa). A Guanylate cyclase domain is found at 884–1014; sequence TLYFSDIVGF…DTVNTASRME (131 aa).

Belongs to the adenylyl cyclase class-4/guanylyl cyclase family. In terms of assembly, homodimer. Interacts with RD3; promotes the exit of GUCY2F from the endoplasmic reticulum and its trafficking to the photoreceptor outer segments. In terms of processing, there are 9 conserved cysteine residues in sensory guanylate cyclases, 6 in the extracellular domain, which may be involved in intra- or interchain disulfide bonds. As to expression, expressed specifically in retina.

The protein localises to the membrane. Its subcellular location is the photoreceptor outer segment membrane. It carries out the reaction GTP = 3',5'-cyclic GMP + diphosphate. With respect to regulation, activated by GUCA1B when free calcium ions concentration is low, and inhibited by GUCA1B when free calcium ions concentration is high. Inhibited by RD3. Functionally, responsible for the synthesis of cyclic GMP (cGMP) in rods and cones of photoreceptors. Plays an essential role in phototransduction, by mediating cGMP replenishment. May also participate in the trafficking of membrane-asociated proteins to the photoreceptor outer segment membrane. The polypeptide is Retinal guanylyl cyclase 2 (GUCY2F) (Bos taurus (Bovine)).